Reading from the N-terminus, the 150-residue chain is 6,7-dimethyl-8-ribityllumazine synthase (150 aa).

5-amino-6-(D-ribitylamino)uracil-binding positions include phenylalanine 11, 42-44 (IFE), and 73-75 (CAI). 78 to 79 (ES) provides a ligand contact to (2S)-2-hydroxy-3-oxobutyl phosphate. Histidine 81 acts as the Proton donor in catalysis. Asparagine 106 lines the 5-amino-6-(D-ribitylamino)uracil pocket. (2S)-2-hydroxy-3-oxobutyl phosphate is bound at residue arginine 120.

It belongs to the DMRL synthase family.

The enzyme catalyses (2S)-2-hydroxy-3-oxobutyl phosphate + 5-amino-6-(D-ribitylamino)uracil = 6,7-dimethyl-8-(1-D-ribityl)lumazine + phosphate + 2 H2O + H(+). It functions in the pathway cofactor biosynthesis; riboflavin biosynthesis; riboflavin from 2-hydroxy-3-oxobutyl phosphate and 5-amino-6-(D-ribitylamino)uracil: step 1/2. Functionally, catalyzes the formation of 6,7-dimethyl-8-ribityllumazine by condensation of 5-amino-6-(D-ribitylamino)uracil with 3,4-dihydroxy-2-butanone 4-phosphate. This is the penultimate step in the biosynthesis of riboflavin. The chain is 6,7-dimethyl-8-ribityllumazine synthase from Paramagnetospirillum magneticum (strain ATCC 700264 / AMB-1) (Magnetospirillum magneticum).